The following is a 414-amino-acid chain: Multifunctional CCA protein (414 aa).

Residues G8 and R11 each coordinate ATP. Residues G8 and R11 each coordinate CTP. Mg(2+) is bound by residues E21 and D23. The ATP site is built by R91, R137, and R140. Positions 91, 137, and 140 each coordinate CTP. Residues 228 to 329 (TGIHTMMTVA…LKLFDAIDVW (102 aa)) enclose the HD domain.

It belongs to the tRNA nucleotidyltransferase/poly(A) polymerase family. Bacterial CCA-adding enzyme type 1 subfamily. As to quaternary structure, monomer. Can also form homodimers and oligomers. Mg(2+) is required as a cofactor. The cofactor is Ni(2+).

The enzyme catalyses a tRNA precursor + 2 CTP + ATP = a tRNA with a 3' CCA end + 3 diphosphate. It carries out the reaction a tRNA with a 3' CCA end + 2 CTP + ATP = a tRNA with a 3' CCACCA end + 3 diphosphate. Functionally, catalyzes the addition and repair of the essential 3'-terminal CCA sequence in tRNAs without using a nucleic acid template. Adds these three nucleotides in the order of C, C, and A to the tRNA nucleotide-73, using CTP and ATP as substrates and producing inorganic pyrophosphate. tRNA 3'-terminal CCA addition is required both for tRNA processing and repair. Also involved in tRNA surveillance by mediating tandem CCA addition to generate a CCACCA at the 3' terminus of unstable tRNAs. While stable tRNAs receive only 3'-terminal CCA, unstable tRNAs are marked with CCACCA and rapidly degraded. This chain is Multifunctional CCA protein, found in Pectobacterium carotovorum subsp. carotovorum (strain PC1).